A 343-amino-acid chain; its full sequence is Tetraacyldisaccharide 4'-kinase (343 aa).

His-51 to Thr-58 contacts ATP.

Belongs to the LpxK family.

It catalyses the reaction a lipid A disaccharide + ATP = a lipid IVA + ADP + H(+). The protein operates within glycolipid biosynthesis; lipid IV(A) biosynthesis; lipid IV(A) from (3R)-3-hydroxytetradecanoyl-[acyl-carrier-protein] and UDP-N-acetyl-alpha-D-glucosamine: step 6/6. Transfers the gamma-phosphate of ATP to the 4'-position of a tetraacyldisaccharide 1-phosphate intermediate (termed DS-1-P) to form tetraacyldisaccharide 1,4'-bis-phosphate (lipid IVA). This Rhodopseudomonas palustris (strain BisB18) protein is Tetraacyldisaccharide 4'-kinase.